We begin with the raw amino-acid sequence, 101 residues long: Large ribosomal subunit protein uL24 (101 aa).

Belongs to the universal ribosomal protein uL24 family. Part of the 50S ribosomal subunit.

One of two assembly initiator proteins, it binds directly to the 5'-end of the 23S rRNA, where it nucleates assembly of the 50S subunit. In terms of biological role, one of the proteins that surrounds the polypeptide exit tunnel on the outside of the subunit. The chain is Large ribosomal subunit protein uL24 from Thermobifida fusca (strain YX).